A 161-amino-acid polypeptide reads, in one-letter code: Large ribosomal subunit protein uL15 (161 aa).

A disordered region spans residues 1–50 (MKLSDIADNAGSRKKRMRIGRGIGSGKGKTGGRGGKGQTARSGVRINGFE). Residues 21–37 (RGIGSGKGKTGGRGGKG) are compositionally biased toward gly residues.

Belongs to the universal ribosomal protein uL15 family. In terms of assembly, part of the 50S ribosomal subunit.

Its function is as follows. Binds to the 23S rRNA. This Nitrobacter winogradskyi (strain ATCC 25391 / DSM 10237 / CIP 104748 / NCIMB 11846 / Nb-255) protein is Large ribosomal subunit protein uL15.